The primary structure comprises 84 residues: Figainin 2 (84 aa).

A signal peptide spans 1–22; that stretch reads MAFLKKSLFLVLFLGIVSLSVC. Residues 23-39 are compositionally biased toward basic and acidic residues; it reads EEEKREGEEKEEKREEE. Positions 23–53 are disordered; that stretch reads EEEKREGEEKEEKREEEEGKEENEDGNEEHK. Positions 23-54 are excised as a propeptide; sequence EEEKREGEEKEEKREEEEGKEENEDGNEEHKE. Positions 40 to 49 are enriched in acidic residues; that stretch reads EGKEENEDGN.

In terms of tissue distribution, expressed by the skin glands.

It localises to the secreted. Functionally, antimicrobial peptide that displays antibacterial, antiprotozoal, and antiviral activity. Exhibits antibacterial activity against the Gram-positive bacteria S.epidermidis ATCC 12228 (MIC=4 uM), E.casseliflavus ATCC 700327 (MIC=4 uM), S.aureus ATCC 25923 (MIC=8 uM) and E.faecalis ATCC 29212 (MIC=8 uM), and the Gram-negative bacteria E.coli ATCC 25922 (MIC=8 uM), K.pneumoniae ATCC 13883 (MIC=8 uM), the multi-resistant clinical isolate strain K.pneumoniae carbapanemase (KPC) MR (MIC=16 uM), and P.aeruginosa ATCC 27853 (MIC=32 uM). Displays antiprotozoal activity against the epimastigote form of T.cruzi (IC(50)=6.32 uM). Does not show antimicrobial against the fungi C.albicans ATCC 90028 and C.parapsilosis ATCC 22019. Displays antiviral activity against the human viruses chikungunya (EC(50)=17.9 uM), Dengue serotype 4 (EC(50)=20.8 uM) and Yellow Fever (EC(50)=21.8 uM). Shows moderate cytolytic activity against human erythrocytes (HC(50)=48.9 uM), and activates the oxidative burst in human neutrophils. Also displays anti-proliferative effects against MCF-7 breast cancer cells (IC(50)=15.3 uM) and B16F10 murine melanoma cells (IC(50)=12.8 uM). The sequence is that of Figainin 2 from Boana raniceps (Chaco tree frog).